Reading from the N-terminus, the 1184-residue chain is MSGHSGHDVKYGRHRTRRSFARISEVLELPNLIEIQTASYQWFLDEGLREMFRDISPIEDFAGNLSLEFIDYDLGEPKYSVEESKNRDANYAAPLRVKLRLINKETGEVKDQEVFMGDFPLMTEMGTFIINGAERVIVSQLVRSPGVYFNGKLDKNGKKGFGSTVIPNRGAWLEYETDAKDVVHVRIDRTRKLPVTVLLRALGFGSDQEIIDLIGDNDYLRNTLEKDNTDNAEKALLEIYERLRPGEPPTVDNARSLLVSRFFDPKRYDLASVGRYKINKKLHLKNRLFNQTLAETLVDPETGEIIASKGDILDRRNLDQIIPNLENGVGFRTLRPTDGVMEDSVLVQSIKIYAPNDDEKEINIIGNAYIEENVKHITPSDIISSISYFFNLLHGVGDTDDIDHLGNRRLRSVGELLQNQFRIGLSRMERVVRERMSIQDMTTITPQQLINIRPVVASIKEFFGSSQLSQFMDQTNPLGELTHKRRLSALGPGGLTRERAGYEVRDVHYSHYGRMCPIETPEGPNIGLINSLSSFAKVNKFGFIETPYRRVDPETNRVTDKIDYLTADEEDNYVVAQANSKLDEQGTFTEEEVMARFRSENLAVEKERIDYMDVSPKQVVSVATACIPFLENDDSNRALMGANMQRQAVPLMHPEAPFVGTGMEHVSAKDSGAAVTAKHDGIVEHVEAREIWVRRVSLVDGKEVTGGIDKYTLRKFVRSNQGTCYNQRPNVAEGDRVVKGEILGNGPSMDSGELALGRNVLVAFMTWDGYNYEDAIIMSERLVKDDVYTSIHIEEFESEARDTKLGPEEMTRDIPNVGEDALRDLDERGIIRVGAEVKDNDLLVGKVTPKGVTELTAEERLLHAIFGEKAREVRDTSLRVPHGGGGIVLDVKIFTREAGDELPPGVNQLVRVYIVQKRKIHEGDKMAGRHGNKGVISRILPEEDMPFMPDGTPVDIMLNPLGVPSRMNIGQVLELHLGMAARALGIHVATPVFDGANEEDVWSTVEEAGMARDAKTVLYDGRSGEAFDNRISVGVMYMIKLAHMVDDKLHARSTGPYSLVTQQPLGGKAQFGGQRFGEMEVWALEAYGAAYTLQEILTIKSDDVVGRVKTYEAIVKGESVPEPGVPESFKVLIKELQSLGMDVKMLSADEEEIEMRDMDDDDFTNQNDAFNIVQPENAATEKTE.

Positions 1160–1184 are disordered; that stretch reads DDDFTNQNDAFNIVQPENAATEKTE.

Belongs to the RNA polymerase beta chain family. In terms of assembly, the RNAP catalytic core consists of 2 alpha, 1 beta, 1 beta' and 1 omega subunit. When a sigma factor is associated with the core the holoenzyme is formed, which can initiate transcription.

It carries out the reaction RNA(n) + a ribonucleoside 5'-triphosphate = RNA(n+1) + diphosphate. In terms of biological role, DNA-dependent RNA polymerase catalyzes the transcription of DNA into RNA using the four ribonucleoside triphosphates as substrates. This chain is DNA-directed RNA polymerase subunit beta, found in Listeria innocua serovar 6a (strain ATCC BAA-680 / CLIP 11262).